Here is a 556-residue protein sequence, read N- to C-terminus: GDP-Man:Man(3)GlcNAc(2)-PP-Dol alpha-1,2-mannosyltransferase (556 aa).

Over 1-7 (MANGLFT) the chain is Lumenal. The helical transmembrane segment at 8–28 (YVAISLFTIGPLLALFIPFVW) threads the bilayer. Topologically, residues 29-184 (RLVGSSLGWY…RWVLASTWPY (156 aa)) are cytoplasmic. The span at 64–79 (SKSAKGRKAEKEDRDT) shows a compositional bias: basic and acidic residues. A disordered region spans residues 64–86 (SKSAKGRKAEKEDRDTFNNTEAT). Residues 185 to 205 (FTLAGQSFGSLIMAWDAFSLL) constitute an intramembrane region (helical). Over 206–454 (VPDIFVDTMG…VGVNGMWNEH (249 aa)) the chain is Cytoplasmic. Positions 455–475 (FGIGVVEYQAAGLISVVHDSG) form an intramembrane region, helical. Residues 476–556 (GPKLDIVVEV…KAVEKPKSRQ (81 aa)) lie on the Cytoplasmic side of the membrane.

The protein belongs to the glycosyltransferase group 1 family. Glycosyltransferase 4 subfamily.

It is found in the endoplasmic reticulum membrane. It carries out the reaction an alpha-D-Man-(1-&gt;3)-[alpha-D-Man-(1-&gt;6)]-beta-D-Man-(1-&gt;4)-beta-D-GlcNAc-(1-&gt;4)-alpha-D-GlcNAc-diphospho-di-trans,poly-cis-dolichol + 2 GDP-alpha-D-mannose = an alpha-D-Man-(1-&gt;2)-alpha-D-Man-(1-&gt;2)-alpha-D-Man-(1-&gt;3)-[alpha-D-Man-(1-&gt;6)]-beta-D-Man-(1-&gt;4)-beta-D-GlcNAc-(1-&gt;4)-alpha-D-GlcNAc-diphospho-di-trans,poly-cis-dolichol + 2 GDP + 2 H(+). Its pathway is protein modification; protein glycosylation. In terms of biological role, GDP-Man:Man(3)GlcNAc(2)-PP-Dol alpha-1,2-mannosyltransferase that operates in the biosynthetic pathway of dolichol-linked oligosaccharides, the glycan precursors employed in protein asparagine (N)-glycosylation. The assembly of dolichol-linked oligosaccharides begins on the cytosolic side of the endoplasmic reticulum membrane and finishes in its lumen. The sequential addition of sugars to dolichol pyrophosphate produces dolichol-linked oligosaccharides containing fourteen sugars, including two GlcNAcs, nine mannoses and three glucoses. Once assembled, the oligosaccharide is transferred from the lipid to nascent proteins by oligosaccharyltransferases. Catalyzes, on the cytoplasmic face of the endoplasmic reticulum, the addition of the fourth and fifth mannose residues to the dolichol-linked oligosaccharide chain, to produce Man(5)GlcNAc(2)-PP-dolichol core oligosaccharide. This Neurospora crassa (strain ATCC 24698 / 74-OR23-1A / CBS 708.71 / DSM 1257 / FGSC 987) protein is GDP-Man:Man(3)GlcNAc(2)-PP-Dol alpha-1,2-mannosyltransferase (alg-11).